Reading from the N-terminus, the 118-residue chain is MSEVQDYKSRLSDPASAKFETLSYLPALTADEIRQQVAYIVSKGWNPAVEHTEPENAFGNYWYMWKLPMFGETDVDTILKEAERCHKRNPHNHVRIVGYDNFKQSQGTSLVVYRGKTV.

The protein belongs to the RuBisCO small chain family. As to quaternary structure, heterohexadecamer of 8 large and 8 small subunits.

Its function is as follows. RuBisCO catalyzes two reactions: the carboxylation of D-ribulose 1,5-bisphosphate, the primary event in carbon dioxide fixation, as well as the oxidative fragmentation of the pentose substrate. Both reactions occur simultaneously and in competition at the same active site. Although the small subunit is not catalytic it is essential for maximal activity. The protein is Ribulose bisphosphate carboxylase small subunit 2 of Acidithiobacillus ferrooxidans (Thiobacillus ferrooxidans).